The following is a 350-amino-acid chain: TLC domain-containing protein fld-1 (350 aa).

The chain crosses the membrane as a helical span at residues 9-29 (TDLLGPVPTMFLWVIVSFAFF). Positions 65–100 (GQEAENTENPPENEAEAGEQVEQEPEPDSRDLSAIP) are disordered. Positions 75 to 90 (PENEAEAGEQVEQEPE) are enriched in acidic residues. Residues 102–279 (NKKWRISNEC…IINGLVIASL (178 aa)) form the TLC domain. Helical transmembrane passes span 111–131 (CVSLFHSVISGLWAAYALLYY), 145–165 (VAINLVLMSAGYLFHDLVDLL), 173–193 (IIELLFHHVVVLSAFAVTMFF), 195–215 (RFLGVVVFGLLMELNSIFLHS), 229–249 (PSFRIIALLNMVTLFAFRLCV), and 270–292 (IINGLVIASLASTNTVLTYRLLA).

Ubiquitously expressed.

Its subcellular location is the cell membrane. Regulates the composition and fluidity of the plasma membrane. Inhibits the incorporation of membrane-fluidizing phospholipids containing omega-3 long-chain polyunsaturated fatty acids (LCPUFA) and thereby promotes membrane rigidity. Does not appear to have any effect on LCPUFA synthesis. The protein is TLC domain-containing protein fld-1 of Caenorhabditis elegans.